A 113-amino-acid chain; its full sequence is Eukaryotic translation initiation factor 1b (113 aa).

N-acetylserine is present on Ser-2. The residue at position 9 (Ser-9) is a Phosphoserine.

It belongs to the SUI1 family.

Probably involved in translation. The chain is Eukaryotic translation initiation factor 1b (EIF1B) from Homo sapiens (Human).